A 350-amino-acid polypeptide reads, in one-letter code: Deoxyhypusine synthase-like protein (350 aa).

It belongs to the deoxyhypusine synthase family.

The chain is Deoxyhypusine synthase-like protein from Chlorobaculum parvum (strain DSM 263 / NCIMB 8327) (Chlorobium vibrioforme subsp. thiosulfatophilum).